A 167-amino-acid polypeptide reads, in one-letter code: Photosystem I assembly protein Ycf3 (167 aa).

TPR repeat units lie at residues 35-68, 72-105, and 120-153; these read AFTYYRDGMSAQSEGEYAEALQNYYEAMRLEIDP, SYILYNIGLIHTSNGEHAKAIEYYLQALERNPSL, and GEQAVEKEDLETSEAWFDQAADYWKQAIALAPNN.

The protein belongs to the Ycf3 family.

The protein localises to the plastid. It is found in the chloroplast thylakoid membrane. Its function is as follows. Essential for the assembly of the photosystem I (PSI) complex. May act as a chaperone-like factor to guide the assembly of the PSI subunits. This is Photosystem I assembly protein Ycf3 from Zygnema circumcarinatum (Green alga).